We begin with the raw amino-acid sequence, 515 residues long: MQLNPAEISDLIKAKIENLSVNAEVRTRGTVISVTDGIVRIHGLSDAMQGEMLEFPGNTFGLAMNLERDSVGAVVLGEHEHIKEGDTVTCTGRILEVPVGRELVGRVVDALGRPIDGKGPINTTLTAPIEKIAPGVIARKSVDQPMQTGLKAIDSMVPVGRGQRELIIGDRQTGKTAVALDAIVNQKGTGVICIYVAIGQKASSIANVVRKLEEHGAMEHTIVVAATASEAAALQYIAPYSGCTMGEFFRDRGEDALIVYDDLSKQAVAYRQISLLLRRPPGREAYPGDVFYLHSRLLERAARVNEHEVEKLTNGEVKGKTGSLTALPIIETQAGDVSAFVPTNVISITDGQIFLETDLFNAGIRPAINAGISVSRVGGAAQTKVIKKLGGGIRLALAQYRELAAFSQFASDLDEATRKQLEHGEVVTELMKQKQFSTLNTAEMALTLWAINNGSYSDVPVAKALAFESEFLSFVRTQHPEVLEAVNASGAMSDESEKTLEAAMKSFKSSYAYQA.

169–176 lines the ATP pocket; sequence GDRQTGKT.

This sequence belongs to the ATPase alpha/beta chains family. F-type ATPases have 2 components, CF(1) - the catalytic core - and CF(0) - the membrane proton channel. CF(1) has five subunits: alpha(3), beta(3), gamma(1), delta(1), epsilon(1). CF(0) has three main subunits: a(1), b(2) and c(9-12). The alpha and beta chains form an alternating ring which encloses part of the gamma chain. CF(1) is attached to CF(0) by a central stalk formed by the gamma and epsilon chains, while a peripheral stalk is formed by the delta and b chains.

It localises to the cell inner membrane. The catalysed reaction is ATP + H2O + 4 H(+)(in) = ADP + phosphate + 5 H(+)(out). In terms of biological role, produces ATP from ADP in the presence of a proton gradient across the membrane. The alpha chain is a regulatory subunit. The protein is ATP synthase subunit alpha of Neisseria meningitidis serogroup A / serotype 4A (strain DSM 15465 / Z2491).